Here is a 55-residue protein sequence, read N- to C-terminus: Large ribosomal subunit protein bL33 (55 aa).

This sequence belongs to the bacterial ribosomal protein bL33 family.

The sequence is that of Large ribosomal subunit protein bL33 from Erythrobacter litoralis (strain HTCC2594).